The following is a 123-amino-acid chain: SOSS complex subunit C homolog (123 aa).

It belongs to the SOSS-C family.

The chain is SOSS complex subunit C homolog from Drosophila ananassae (Fruit fly).